Here is a 192-residue protein sequence, read N- to C-terminus: Small ribosomal subunit protein bS16 (192 aa).

Residues 153–192 (AEAKAKAEAEAAAAAEEAAETEETPVEAAAEEAPAAESAE) are disordered. A compositionally biased stretch (low complexity) spans 178-192 (VEAAAEEAPAAESAE).

It belongs to the bacterial ribosomal protein bS16 family.

The sequence is that of Small ribosomal subunit protein bS16 from Porphyromonas gingivalis (strain ATCC BAA-308 / W83).